The sequence spans 214 residues: MGRRPARCYRYCKNKPYPKSRFCRGVPDAKIRIFDLGRKKAKVDEFPLCGHMVSDEYEQLSSEALEAARICANKYMVKSCGKDGFHIRVRLHPFHVIRINKMLSCAGADRLQTGMRGAFGKPQGTVARVHIGQVIMSIRTKLQNKEHVVEALRRAKFKFPGRQKIHISKKWGFTKFNADEFEDMVAEKRLIPDGCGVKYIPNRGPLDKWRALHS.

Arg32 bears the Citrulline mark. A Glycyl lysine isopeptide (Lys-Gly) (interchain with G-Cter in SUMO2) cross-link involves residue Lys175. Lys188 participates in a covalent cross-link: Glycyl lysine isopeptide (Lys-Gly) (interchain with G-Cter in ubiquitin).

This sequence belongs to the universal ribosomal protein uL16 family. In terms of assembly, component of the large ribosomal subunit. Mature ribosomes consist of a small (40S) and a large (60S) subunit. The 40S subunit contains about 33 different proteins and 1 molecule of RNA (18S). The 60S subunit contains about 49 different proteins and 3 molecules of RNA (28S, 5.8S and 5S). Citrullinated by PADI4. In terms of processing, ufmylated by UFL1.

It localises to the cytoplasm. Component of the large ribosomal subunit. Plays a role in the formation of actively translating ribosomes. May play a role in the embryonic brain development. The sequence is that of Large ribosomal subunit protein uL16 (RPL10) from Oryctolagus cuniculus (Rabbit).